Here is a 942-residue protein sequence, read N- to C-terminus: Alpha,alpha-trehalose-phosphate synthase [UDP-forming] 1 (942 aa).

The tract at residues 28-57 (REKRKSNRARNPNDVAGSSENSENDLRLEG) is disordered. Positions 92–559 (QRLLVVANRL…AETFVSELND (468 aa)) are glycosyltransferase. The segment at 815–892 (DMPAIARSRP…LGNSRRPSPE (78 aa)) is disordered. Composition is skewed to low complexity over residues 821–833 (RSRP…AKSS) and 841–867 (SKST…NKSS). The segment covering 879–888 (SNHSLGNSRR) has biased composition (polar residues).

It in the N-terminal section; belongs to the glycosyltransferase 20 family. In the C-terminal section; belongs to the trehalose phosphatase family. As to expression, expressed in seedlings, leaves, roots, stems, flowers and siliques.

Its subcellular location is the vacuole. The protein localises to the secreted. It is found in the cell wall. It localises to the cytoplasm. It carries out the reaction D-glucose 6-phosphate + UDP-alpha-D-glucose = alpha,alpha-trehalose 6-phosphate + UDP + H(+). Required for normal embryo development, vegetative growth and transition to flowering. Regulates embryo growth, cell wall deposition, starch and sucrose degradation, but not cell differentiation. Involved in the regulation of glucose sensing and signaling genes during plant development. The polypeptide is Alpha,alpha-trehalose-phosphate synthase [UDP-forming] 1 (Arabidopsis thaliana (Mouse-ear cress)).